The primary structure comprises 626 residues: Chaperone protein HtpG (626 aa).

The segment at 1–339 (MSQNQETRGF…SNDLPLNVSR (339 aa)) is a; substrate-binding. The tract at residues 340–555 (EILQDNKITA…NDQMTTQMAK (216 aa)) is b. A c region spans residues 556–626 (LFAAAGQPVP…FIKRINKLLG (71 aa)).

Belongs to the heat shock protein 90 family. In terms of assembly, homodimer.

Its subcellular location is the cytoplasm. Functionally, molecular chaperone. Has ATPase activity. This is Chaperone protein HtpG from Haemophilus influenzae (strain ATCC 51907 / DSM 11121 / KW20 / Rd).